We begin with the raw amino-acid sequence, 367 residues long: Voltage-gated potassium channel subunit beta-2 (367 aa).

3 positions are modified to phosphoserine: Ser-9, Ser-14, and Ser-20. Arg-28 is modified (asymmetric dimethylarginine; alternate). Arg-28 is modified (omega-N-methylarginine; alternate). Ser-31 is subject to Phosphoserine. 4 residues coordinate NADP(+): Thr-56, Trp-57, Gln-63, and Asp-85. Catalysis depends on Tyr-90, which acts as the Proton donor/acceptor. Phosphoserine is present on Ser-112. Lys-124 carries the post-translational modification N6-acetyllysine. NADP(+) is bound by residues Asn-158, Ser-188, Arg-189, Gln-214, Trp-243, Ser-244, Pro-245, Leu-246, Ala-247, Cys-248, Lys-254, Tyr-262, Arg-264, Gly-323, Ser-325, Gln-329, Glu-332, and Asn-333.

It belongs to the shaker potassium channel beta subunit family. In terms of assembly, homotetramer. Interaction with tetrameric potassium channel alpha subunits gives rise to a heterooctamer. Identified in potassium channel complexes containing KCNA1, KCNA2, KCNA4, KCNA5, KCNA6, KCNAB1, KCNAB2 and KCND3. Interacts (in unphosphorylated form) with MAPRE1. Forms a ternary complex with SQSTM1 and PRKCZ. Post-translationally, phosphorylated by PRKCZ; may be regulated by incorporation in a complex composed of PRKCZ and SQSTM1. As to expression, detected in the juxtaparanodal region of nodes of Ranvier in myelinated nerve fibers in the spinal cord (at protein level).

Its subcellular location is the cytoplasm. The protein localises to the membrane. It is found in the cell membrane. It localises to the cell projection. The protein resides in the axon. Its subcellular location is the synapse. The protein localises to the synaptosome. It is found in the cytoskeleton. The catalysed reaction is hydroxyacetone + NADP(+) = methylglyoxal + NADPH + H(+). The enzyme catalyses (E)-4-oxonon-2-en-1-ol + NADP(+) = (E)-4-oxonon-2-enal + NADPH + H(+). In terms of biological role, regulatory subunit of the voltage-gated potassium (Kv) Shaker channels composed of pore-forming and potassium-conducting alpha subunits and of regulatory beta subunits. The beta-2/KCNAB2 cytoplasmic subunit promotes potassium channel closure via a mechanism that does not involve physical obstruction of the channel pore. Promotes the inactivation of Kv1.4/KCNA4 and Kv1.5/KCNA5 alpha subunit-containing channels. Displays nicotinamide adenine dinucleotide phosphate (NADPH)-dependent aldoketoreductase activity by catalyzing the NADPH-dependent reduction of a wide range of aldehyde and ketone substrates. Substrate specificity includes methylglyoxal, 9,10-phenanthrenequinone, prostaglandin J2, 4-nitrobenzaldehyde, 4-nitroacetophenone and 4-oxo-trans-2-nonenal (in vitro, no physiological substrate identified yet). The binding of oxidized and reduced nucleotide alters Kv channel gating and may contribute to dynamic fine tuning of cell excitability. Contributes to the regulation of nerve signaling, and prevents neuronal hyperexcitability. This Bos taurus (Bovine) protein is Voltage-gated potassium channel subunit beta-2 (KCNAB2).